Consider the following 122-residue polypeptide: Large ribosomal subunit protein uL14 (122 aa).

It belongs to the universal ribosomal protein uL14 family. In terms of assembly, part of the 50S ribosomal subunit. Forms a cluster with proteins L3 and L19. In the 70S ribosome, L14 and L19 interact and together make contacts with the 16S rRNA in bridges B5 and B8.

In terms of biological role, binds to 23S rRNA. Forms part of two intersubunit bridges in the 70S ribosome. This Listeria monocytogenes serotype 4b (strain CLIP80459) protein is Large ribosomal subunit protein uL14.